The primary structure comprises 1079 residues: Psi-producing oxygenase A (1079 aa).

The tract at residues 105-446 (TNTFLTTLWN…DGSYDDNDLV (342 aa)) is linoleate 8R-lipoxygenase. A heme b-binding site is contributed by His202. Tyr374 is an active-site residue. A heme b-binding site is contributed by His377. The tract at residues 654-1079 (QFINSHSACM…WDGDLPEVKE (426 aa)) is 9,12-octadecadienoate 8-hydroperoxide 8R-isomerase.

It belongs to the peroxidase family. In terms of assembly, homotetramer. The cofactor is heme b.

It carries out the reaction (9Z,12Z)-octadecadienoate + O2 = (8R,9Z,12Z)-8-hydroperoxyoctadeca-9,12-dienoate. The catalysed reaction is (8R,9Z,12Z)-8-hydroperoxyoctadeca-9,12-dienoate = (5S,8R,9Z,12Z)-5,8-dihydroxyoctadeca-9,12-dienoate. Functionally, bifunctional heme-containing enzyme that oxidizes linoleic acid to (8R,9Z,12Z)-8-hydroperoxyoctadeca-9,12-dienoate (within the N-terminal heme peroxidase domain), which is subsequently isomerized to (5S,8R,9Z,12Z)-5,8-dihydroxyoctadeca-9,12-dienoate (within the C-terminal P450 heme thiolate domain). Oxidized unsaturated fatty acids, so-called oxylipins, derived from endogenous fatty acids, influence the development of the asexual conidiophores and sexual cleistothecia and regulate the secondary metabolism. These substances were collectively named psi factors and are primarily a mixture of hydroxylated oleic, linoleic and alpha-linolenic acids. They are termed psi-beta, psi-alpha, and psi-gamma, respectively. Oxylipins may also serve as activators of mammalian immune responses contributing to enhanced resistance to opportunistic fungi and as factors that modulate fungal development contributing to resistance to host defenses. This Aspergillus fumigatus (strain CBS 144.89 / FGSC A1163 / CEA10) (Neosartorya fumigata) protein is Psi-producing oxygenase A (ppoA).